We begin with the raw amino-acid sequence, 438 residues long: Putative ZDHHC-type palmitoyltransferase 7 (438 aa).

N12 and N13 each carry an N-linked (GlcNAc...) asparagine glycan. The next 2 membrane-spanning stretches (helical) occupy residues 48 to 68 (IFCLVHFIVYCVIIFRKGTIL) and 77 to 97 (YFYLIWTHCVFFFAIGTYFLI). N-linked (GlcNAc...) asparagine glycans are attached at residues N119, N144, and N157. The interval 183-239 (EDSINDDTITTTTTTTTTTSTSTIPEISNDDDDNNNENNNDNVNNRNNNNSNGEKED) is disordered. Low complexity-rich tracts occupy residues 190–206 (TITTTTTTTTTTSTSTI) and 218–234 (NENNNDNVNNRNNNNSN). N231 carries N-linked (GlcNAc...) asparagine glycosylation. Positions 249–299 (YFCKKCLVDIPLRTKHCVKCNRCVLKYDHHCVFIGGCVGLNNHKNFLLFLL) constitute a DHHC domain. 2 helical membrane passes run 294–314 (FLLFLLAESLLLLLGLRIIVT) and 330–350 (IAIIPPTLLIFGGLCMPFALF). N-linked (GlcNAc...) asparagine glycosylation occurs at N360.

This sequence belongs to the DHHC palmitoyltransferase family.

The protein localises to the membrane. The enzyme catalyses L-cysteinyl-[protein] + hexadecanoyl-CoA = S-hexadecanoyl-L-cysteinyl-[protein] + CoA. The polypeptide is Putative ZDHHC-type palmitoyltransferase 7 (Dictyostelium discoideum (Social amoeba)).